The sequence spans 36 residues: Photosystem I reaction center subunit VIII (36 aa).

A helical membrane pass occupies residues 9-29 (ILVPLVGLVFPAIAMASLFLY).

It belongs to the PsaI family.

Its subcellular location is the plastid. It is found in the chloroplast thylakoid membrane. May help in the organization of the PsaL subunit. In Oltmannsiellopsis viridis (Marine flagellate), this protein is Photosystem I reaction center subunit VIII.